The sequence spans 452 residues: Membrane-bound acylglycerophosphatidylinositol O-acyltransferase mboa-7 (452 aa).

The next 4 membrane-spanning stretches (helical) occupy residues 4 to 24, 53 to 73, 79 to 99, and 104 to 124; these read IIGL…FSFA, PRIA…AFAP, FYVF…HYFL, and VASH…GITF. Asn137 carries N-linked (GlcNAc...) asparagine glycosylation. 3 helical membrane-spanning segments follow: residues 153–173, 220–240, and 244–264; these read FAYF…YQML, AIWE…FVVF, and VYSA…GIYP. An N-linked (GlcNAc...) asparagine glycan is attached at Asn319. Residue His350 is part of the active site. The chain crosses the membrane as a helical span at residues 354–374; the sequence is AGYFMSFGVVAMCAILEDVIF. N-linked (GlcNAc...) asparagine glycosylation occurs at Asn414. Residues 421–441 form a helical membrane-spanning segment; it reads FWSSIYYWLPLLCVPFYIYSV.

It belongs to the membrane-bound acyltransferase family.

It is found in the membrane. The catalysed reaction is a 1-acyl-sn-glycero-3-phospho-(1D-myo-inositol) + an acyl-CoA = a 1,2-diacyl-sn-glycero-3-phospho-(1D-myo-inositol) + CoA. It catalyses the reaction a fatty acyl-[ACP] + a 1-acyl-sn-glycero-3-phosphate = a 1,2-diacyl-sn-glycero-3-phosphate + holo-[ACP]. The protein operates within lipid metabolism; phospholipid metabolism. Acyltransferase which mediates the conversion of lysophosphatidylinositol (1-acylglycerophosphatidylinositol or LPI) into phosphatidylinositol (1,2-diacyl-sn-glycero-3-phosphoinositol or PI) (LPIAT activity). Prefers arachidonoyl-CoA or eicosapentaenoic acid (EPA) as the acyl donor. Prefers sn-2-LPI rather than sn-1-LPI as the acyl acceptor. Lysophospholipid acyltransferases (LPLATs) catalyze the reacylation step of the phospholipid remodeling pathway also known as the Lands cycle. This chain is Membrane-bound acylglycerophosphatidylinositol O-acyltransferase mboa-7, found in Caenorhabditis briggsae.